A 317-amino-acid polypeptide reads, in one-letter code: Sulfate adenylyltransferase subunit 2 (317 aa).

Disordered regions lie at residues 1-21 and 298-317; these read MPDSRPDTELSNPQSAKAPLD and RAIDRDQSGSMEKKKREGYF.

The protein belongs to the PAPS reductase family. CysD subfamily. In terms of assembly, heterodimer composed of CysD, the smaller subunit, and CysN.

It catalyses the reaction sulfate + ATP + H(+) = adenosine 5'-phosphosulfate + diphosphate. Its pathway is sulfur metabolism; hydrogen sulfide biosynthesis; sulfite from sulfate: step 1/3. Its function is as follows. With CysN forms the ATP sulfurylase (ATPS) that catalyzes the adenylation of sulfate producing adenosine 5'-phosphosulfate (APS) and diphosphate, the first enzymatic step in sulfur assimilation pathway. APS synthesis involves the formation of a high-energy phosphoric-sulfuric acid anhydride bond driven by GTP hydrolysis by CysN coupled to ATP hydrolysis by CysD. The polypeptide is Sulfate adenylyltransferase subunit 2 (Rhizobium johnstonii (strain DSM 114642 / LMG 32736 / 3841) (Rhizobium leguminosarum bv. viciae)).